The sequence spans 407 residues: Argininosuccinate synthase (407 aa).

ATP is bound by residues 16–24 and A44; that span reads AYSGGLDTS. L-citrulline is bound by residues Y96 and S101. G126 contributes to the ATP binding site. L-aspartate contacts are provided by T128, N132, and D133. N132 lines the L-citrulline pocket. L-citrulline-binding residues include R136, S185, S194, E270, and Y282.

It belongs to the argininosuccinate synthase family. Type 1 subfamily. In terms of assembly, homotetramer.

The protein resides in the cytoplasm. It carries out the reaction L-citrulline + L-aspartate + ATP = 2-(N(omega)-L-arginino)succinate + AMP + diphosphate + H(+). It participates in amino-acid biosynthesis; L-arginine biosynthesis; L-arginine from L-ornithine and carbamoyl phosphate: step 2/3. The polypeptide is Argininosuccinate synthase (Shewanella sp. (strain W3-18-1)).